Consider the following 80-residue polypeptide: MATRGWFSESSAQVAQIGDIMFQGHWQWVSNALQATAAAVDNINRNAYPGVSRSGSGEGAFSSSPSNGFRPKRIRSRFNR.

An a bacteriochlorophyll c-binding site is contributed by His25. The tract at residues 49–80 is disordered; sequence PGVSRSGSGEGAFSSSPSNGFRPKRIRSRFNR. Positions 54 to 80 are excised as a propeptide; sequence SGSGEGAFSSSPSNGFRPKRIRSRFNR. Residues 70–80 show a composition bias toward basic residues; that stretch reads RPKRIRSRFNR.

It belongs to the BChl C/E-binding protein family.

It localises to the chlorosome. The protein localises to the chlorosome envelope. Component of the photosynthetic apparatus. The light harvesting B740 complex binds bacteriochlorophyll c. This is Bacteriochlorophyll c-binding protein (cmsA) from Chloroflexus aurantiacus (strain ATCC 29366 / DSM 635 / J-10-fl).